A 187-amino-acid chain; its full sequence is UPF0340 protein SPG_0604 (187 aa).

Belongs to the UPF0340 family.

The sequence is that of UPF0340 protein SPG_0604 from Streptococcus pneumoniae serotype 19F (strain G54).